A 196-amino-acid chain; its full sequence is Holliday junction branch migration complex subunit RuvA (196 aa).

Residues 1–63 form a domain I region; it reads MINKICGKIV…EDEIRLFGFL (63 aa). The interval 64-135 is domain II; it reads NVSEREVFEK…KLRGKLVKVN (72 aa). The tract at residues 135 to 138 is flexible linker; sequence NEAS. The segment at 139–196 is domain III; that stretch reads SGVLKFKELEQSIVNMGFDRKLVAAAIKEIMLIDEFLMLRQVDQEQFLFREILRKLSG.

The protein belongs to the RuvA family. As to quaternary structure, homotetramer. Forms an RuvA(8)-RuvB(12)-Holliday junction (HJ) complex. HJ DNA is sandwiched between 2 RuvA tetramers; dsDNA enters through RuvA and exits via RuvB. An RuvB hexamer assembles on each DNA strand where it exits the tetramer. Each RuvB hexamer is contacted by two RuvA subunits (via domain III) on 2 adjacent RuvB subunits; this complex drives branch migration. In the full resolvosome a probable DNA-RuvA(4)-RuvB(12)-RuvC(2) complex forms which resolves the HJ.

It localises to the cytoplasm. Functionally, the RuvA-RuvB-RuvC complex processes Holliday junction (HJ) DNA during genetic recombination and DNA repair, while the RuvA-RuvB complex plays an important role in the rescue of blocked DNA replication forks via replication fork reversal (RFR). RuvA specifically binds to HJ cruciform DNA, conferring on it an open structure. The RuvB hexamer acts as an ATP-dependent pump, pulling dsDNA into and through the RuvAB complex. HJ branch migration allows RuvC to scan DNA until it finds its consensus sequence, where it cleaves and resolves the cruciform DNA. The protein is Holliday junction branch migration complex subunit RuvA of Borrelia turicatae (strain 91E135).